Reading from the N-terminus, the 180-residue chain is Translation initiation factor IF-3 (180 aa).

The protein belongs to the IF-3 family. Monomer.

It is found in the cytoplasm. Its function is as follows. IF-3 binds to the 30S ribosomal subunit and shifts the equilibrium between 70S ribosomes and their 50S and 30S subunits in favor of the free subunits, thus enhancing the availability of 30S subunits on which protein synthesis initiation begins. The polypeptide is Translation initiation factor IF-3 (Pasteurella multocida (strain Pm70)).